We begin with the raw amino-acid sequence, 172 residues long: Type IV secretion system putative outer membrane lipoprotein BRA0058/BS1330_II0058 (172 aa).

The N-terminal stretch at 1 to 15 (MRTLVMVACAVSLAA) is a signal peptide. Residue Cys16 is the site of N-palmitoyl cysteine attachment. Residue Cys16 is the site of S-diacylglycerol cysteine attachment. The region spanning 58–172 (WPARPPKQTV…RRVDIEILRK (115 aa)) is the OmpA-like domain.

It localises to the cell outer membrane. The VirB system could be required for the establishment of the replication niche in the host. This is Type IV secretion system putative outer membrane lipoprotein BRA0058/BS1330_II0058 from Brucella suis biovar 1 (strain 1330).